Reading from the N-terminus, the 1360-residue chain is TRAF2 and NCK-interacting protein kinase (1360 aa).

The region spanning 25–289 is the Protein kinase domain; sequence FELVELVGNG…TEQLMKHPFI (265 aa). ATP-binding positions include 31–39 and lysine 54; that span reads VGNGTYGQV. The active-site Proton acceptor is aspartate 153. At threonine 187 the chain carries Phosphothreonine. 3 disordered regions span residues 284 to 347, 398 to 440, and 539 to 589; these read MKHP…LPGE, QKEQ…RRRA, and ERSR…RPVD. Residues 288–307 show a composition bias toward basic and acidic residues; it reads FIRDQPNERQVRIQLKDHID. Residues 290–1047 form a mediates interaction with NEDD4 region; that stretch reads RDQPNERQVR…EIRKYKKRFN (758 aa). Positions 317–335 are enriched in acidic residues; it reads DETEYEYSGSEEEEEENDS. Residues serine 324 and serine 326 each carry the phosphoserine modification. 2 positions are modified to phosphoserine: serine 560 and serine 570. Phosphothreonine is present on threonine 581. Serine 600, serine 608, serine 610, and serine 640 each carry phosphoserine. Disordered stretches follow at residues 601-801, 814-878, 908-927, and 933-998; these read QGPA…KAID, LRIE…YNVG, TSGEKKRSGHSDSNGFAGHI, and VQQS…ESSA. Over residues 652–669 the composition is skewed to basic and acidic residues; sequence RIEKFDRSSWLRQEEDIP. A phosphoserine mark is found at serine 678, serine 680, serine 688, serine 701, serine 707, serine 720, serine 764, serine 766, and serine 769. Residues 720–755 are compositionally biased toward low complexity; it reads SPLQRTSSGSSSSSSTPSSQPSSQGGSQPGSQAGSS. 2 stretches are compositionally biased toward basic and acidic residues: residues 775–789 and 814–827; these read EPAKVKPEESRDITR and LRIEETNRPMKKVT. The segment covering 834–847 has biased composition (acidic residues); sequence EESESSEEEEEDGE. Residues 908–917 are compositionally biased toward basic and acidic residues; sequence TSGEKKRSGH. Phosphoserine is present on serine 959. Residues 987-996 are compositionally biased toward acidic residues; it reads TDEDEEDEES. The region spanning 1047–1334 is the CNH domain; sequence NSEILCAALW…KFLCERNDKV (288 aa).

This sequence belongs to the protein kinase superfamily. STE Ser/Thr protein kinase family. STE20 subfamily. As to quaternary structure, interacts (via the CNH domain) with RAP2A (GTP-bound form preferentially); the interaction is direct and required for the activation of TNIK by RAP2A. Interacts with NEDD4; recruits RAP2A to NEDD4. Interacts with TRAF2 and NCK. Interacts with TCF7L2/TCF4 and CTNNB1; the interaction is direct. Interacts with TANC1. Autophosphorylated. Autophosphorylation is activated by RAP2A and induces association to the cytoskeletal fraction. Expressed ubiquitously. Highest levels observed in heart, brain and skeletal muscle. Expressed in normal colonic epithelia and colorectal cancer tissues.

Its subcellular location is the nucleus. The protein localises to the cytoplasm. It localises to the recycling endosome. The protein resides in the cytoskeleton. The catalysed reaction is L-seryl-[protein] + ATP = O-phospho-L-seryl-[protein] + ADP + H(+). The enzyme catalyses L-threonyl-[protein] + ATP = O-phospho-L-threonyl-[protein] + ADP + H(+). Serine/threonine kinase that acts as an essential activator of the Wnt signaling pathway. Recruited to promoters of Wnt target genes and required to activate their expression. May act by phosphorylating TCF4/TCF7L2. Appears to act upstream of the JUN N-terminal pathway. May play a role in the response to environmental stress. Part of a signaling complex composed of NEDD4, RAP2A and TNIK which regulates neuronal dendrite extension and arborization during development. More generally, it may play a role in cytoskeletal rearrangements and regulate cell spreading. Phosphorylates SMAD1 on Thr-322. Activator of the Hippo signaling pathway which plays a pivotal role in organ size control and tumor suppression by restricting proliferation and promoting apoptosis. MAP4Ks act in parallel to and are partially redundant with STK3/MST2 and STK4/MST2 in the phosphorylation and activation of LATS1/2, and establish MAP4Ks as components of the expanded Hippo pathway. This chain is TRAF2 and NCK-interacting protein kinase, found in Homo sapiens (Human).